We begin with the raw amino-acid sequence, 563 residues long: MASRSCICQVSAGIIFLIGAALLVAGLVIVLNVFPNIVNNQINDSKVLGLNADGTLNSFTDSWVNSKYISTMQYWVYDYTNTIGIMNRAIYPDVREKGPYAFDEILTMDKLNFSENGEFMEFRQIQTFVFNPNKSCAGCDPYKDKVLIPDMGFQVGIDQIDTVIEGILKNPLAATICHAIMKGKPNANQTCSNLGALIEGELGTLISLFNVSPFTTVTVDQLLFSGYKTPFVEKFLDEALGMLHFLFGTAPKPLDDPPIQLNPLNGTSDIINTVLTGKTDPLKAGYMTEFRSISNNSLFNSIGNTLPPMWWPYANKTYCKDPNSALVLTGTNGDYFKNFVKKTDILPAFVSDVCRTIHFVFDREVTVKGFKGYRFVMPPTQFDYSLDENCGYCIPLKYGSYEYPAQSACLPSGLLDISQCTGGPIIMSKPHFYQASKVVSKFVPRFKPTYDNDETMLDIEPNTGTVLQAQKRLQINMLVNQFKHIRSYSVMRPGAYPLAWVNESFYMDQNTIDQLNSQLFTPVSTVNTICWIAVGLGAGLIALSIVMVIVSFCCFRDEHHKTS.

Residues 1–13 (MASRSCICQVSAG) lie on the Cytoplasmic side of the membrane. The chain crosses the membrane as a helical span at residues 14 to 34 (IIFLIGAALLVAGLVIVLNVF). The Lumenal portion of the chain corresponds to 35–528 (PNIVNNQIND…LFTPVSTVNT (494 aa)). N-linked (GlcNAc...) asparagine glycosylation is found at Asn-43, Asn-112, Asn-133, Asn-188, Asn-265, Asn-295, Asn-315, and Asn-502. Residues 529–549 (ICWIAVGLGAGLIALSIVMVI) traverse the membrane as a helical segment. Over 550 to 563 (VSFCCFRDEHHKTS) the chain is Cytoplasmic.

This sequence belongs to the CD36 family.

Its subcellular location is the membrane. This is an uncharacterized protein from Caenorhabditis elegans.